The sequence spans 357 residues: Peptide chain release factor 1 (357 aa).

An N5-methylglutamine modification is found at Q234.

Belongs to the prokaryotic/mitochondrial release factor family. Post-translationally, methylated by PrmC. Methylation increases the termination efficiency of RF1.

The protein resides in the cytoplasm. Its function is as follows. Peptide chain release factor 1 directs the termination of translation in response to the peptide chain termination codons UAG and UAA. The polypeptide is Peptide chain release factor 1 (Lactococcus lactis subsp. cremoris (strain SK11)).